The following is a 1075-amino-acid chain: Nuclear factor of activated T-cells, cytoplasmic 3 (1075 aa).

Threonine 2 bears the N-acetylthreonine mark. The tract at residues 18–37 (FGEDGAPAPPPPGSRPADLE) is disordered. Positions 109-114 (PSIQIT) are calcineurin-binding. A disordered region spans residues 205–306 (LGSPLTSPGG…PGHSPRGSVT (102 aa)). A run of 2 repeats spans residues 207–223 (SPLT…PGEE) and 236–252 (SPRQ…VTDE). The interval 207–308 (SPLTSPGGSP…HSPRGSVTED (102 aa)) is 3 X SP repeats. The span at 236–253 (SPRQSPCHSPRSSVTDEN) shows a compositional bias: polar residues. The span at 256-270 (SPRPASGPSSRPTSP) shows a compositional bias: low complexity. Positions 273 to 275 (KRR) match the Nuclear localization signal motif. Repeat unit 3 spans residues 292–308 (SPVPSPGHSPRGSVTED). Serine 344 and serine 372 each carry phosphoserine. Residues 415–596 (SSLPPLDWPL…IPVECSQRSA (182 aa)) enclose the RHD domain. A DNA-binding region spans residues 444–451 (RAHYETEG). Positions 686–688 (KRK) match the Nuclear localization signal motif. Disordered stretches follow at residues 711-739 (DLSS…SHDS) and 887-988 (SNTG…GLSA). Composition is skewed to polar residues over residues 724-739 (AQTQ…SHDS) and 887-912 (SNTG…QLQP). 2 stretches are compositionally biased toward low complexity: residues 916-939 (GPSH…SSPL) and 949-967 (PMPY…SPAT). The span at 970 to 981 (HSGQHSTQAQST) shows a compositional bias: polar residues. Residues 1032-1041 (TLDDVNEIIG) carry the Nuclear export signal motif. The segment at 1049 to 1075 (VSQGAGVSRQAPLPSPESLDLGRSDGL) is disordered. Residues serine 1063 and serine 1066 each carry the phosphoserine modification.

In terms of assembly, NFATC proteins bind to DNA as monomers. Member of the multicomponent NFATC transcription complex that consists of at least two components, a pre-existing cytoplasmic component NFATC2 and an inducible nuclear component NFATC1. Other members such as NFATC4, or members of the activating protein-1 family, MAF, GATA4 and Cbp/p300 can also bind the complex. Component of a promoter-binding complex composed of STAT3, NFATC3 and NFATC4; complex formation is enhanced by calcineurin. Interacts with TRIM17; this interaction prevents NFATC3 nuclear localization. Interacts with and ubiquitinated by STUB1/CHIP; HSPA1A/HSP70 is required as a co-chaperone. In terms of processing, ubiquitinated by STUB1/CHIP, leading to proteasomal degradation. Post-translationally, phosphorylated by NFATC-kinase; dephosphorylated by calcineurin. Predominantly expressed in thymus and is also found in peripheral blood leukocytes and kidney. As to expression, predominantly expressed in skeletal muscle. Also found weakly expressed in the thymus, kidney, testis, spleen, prostate, ovary, small intestine, heart, placenta and pancreas. In terms of tissue distribution, expressed in thymus and kidney. Expressed in thymus and skeletal muscle.

It localises to the cytoplasm. Its subcellular location is the nucleus. Its function is as follows. Acts as a regulator of transcriptional activation. Binds to the TNFSF11/RANKL promoter region and promotes TNFSF11 transcription. Binding to the TNFSF11 promoter region is increased by high levels of Ca(2+) which induce NFATC3 expression and may lead to regulation of TNFSF11 expression in osteoblasts. Plays a role in promoting mesenteric arterial wall remodeling in response to the intermittent hypoxia-induced increase in EDN1 and ROCK signaling. As a result NFATC3 colocalizes with F-actin filaments, translocates to the nucleus and promotes transcription of the smooth muscle hypertrophy and differentiation marker ACTA2. Promotes lipopolysaccharide-induced apoptosis and hypertrophy in cardiomyocytes. Following JAK/STAT signaling activation and as part of a complex with NFATC4 and STAT3, binds to the alpha-beta E4 promoter region of CRYAB and activates transcription in cardiomyocytes. In conjunction with NFATC4, involved in embryonic heart development via maintenance of cardiomyocyte survival, proliferation and differentiation. Plays a role in the inducible expression of cytokine genes in T-cells, especially in the induction of the IL-2. Required for thymocyte maturation during DN3 to DN4 transition and during positive selection. Positively regulates macrophage-derived polymicrobial clearance, via binding to the promoter region and promoting transcription of NOS2 resulting in subsequent generation of nitric oxide. Involved in Ca(2+)-mediated transcriptional responses upon Ca(2+) influx via ORAI1 CRAC channels. The sequence is that of Nuclear factor of activated T-cells, cytoplasmic 3 from Homo sapiens (Human).